A 181-amino-acid polypeptide reads, in one-letter code: Type II secretion system protein H (181 aa).

The propeptide at 1–5 is leader sequence; it reads MRQRG. N-methylphenylalanine is present on F6. The chain crosses the membrane as a helical span at residues 6–29; it reads FTLLEIMLVVLLAGVAATLVMMAI.

This sequence belongs to the GSP H family. In terms of assembly, type II secretion is composed of four main components: the outer membrane complex, the inner membrane complex, the cytoplasmic secretion ATPase and the periplasm-spanning pseudopilus. Interacts with core component OutG. Cleaved by prepilin peptidase. In terms of processing, methylated by prepilin peptidase at the amino group of the N-terminal phenylalanine once the leader sequence is cleaved by prepilin peptidase.

It is found in the cell inner membrane. In terms of biological role, component of the type II secretion system required for the energy-dependent secretion of extracellular factors such as proteases and toxins from the periplasm. Part of the pseudopilus tip complex that is critical for the recognition and binding of secretion substrates. The chain is Type II secretion system protein H (outH) from Dickeya chrysanthemi (Pectobacterium chrysanthemi).